The chain runs to 393 residues: Aspartate aminotransferase (393 aa).

The L-aspartate site is built by G38, W124, and N174. Position 237 is an N6-(pyridoxal phosphate)lysine (K237).

The protein belongs to the class-I pyridoxal-phosphate-dependent aminotransferase family. In terms of assembly, homodimer. Requires pyridoxal 5'-phosphate as cofactor.

Its subcellular location is the cytoplasm. The catalysed reaction is L-aspartate + 2-oxoglutarate = oxaloacetate + L-glutamate. The chain is Aspartate aminotransferase (aspC) from Geobacillus stearothermophilus (Bacillus stearothermophilus).